A 689-amino-acid polypeptide reads, in one-letter code: Elongation factor G (689 aa).

Residues 9–283 (AKFRNIGIMA…AIVEFMPSPL (275 aa)) enclose the tr-type G domain. GTP is bound by residues 18–25 (AHIDAGKT), 82–86 (DTPGH), and 136–139 (NKMD).

This sequence belongs to the TRAFAC class translation factor GTPase superfamily. Classic translation factor GTPase family. EF-G/EF-2 subfamily.

It localises to the cytoplasm. In terms of biological role, catalyzes the GTP-dependent ribosomal translocation step during translation elongation. During this step, the ribosome changes from the pre-translocational (PRE) to the post-translocational (POST) state as the newly formed A-site-bound peptidyl-tRNA and P-site-bound deacylated tRNA move to the P and E sites, respectively. Catalyzes the coordinated movement of the two tRNA molecules, the mRNA and conformational changes in the ribosome. The sequence is that of Elongation factor G from Clostridium botulinum (strain Kyoto / Type A2).